A 100-amino-acid polypeptide reads, in one-letter code: Integration host factor subunit alpha (100 aa).

The protein belongs to the bacterial histone-like protein family. Heterodimer of an alpha and a beta chain.

This protein is one of the two subunits of integration host factor, a specific DNA-binding protein that functions in genetic recombination as well as in transcriptional and translational control. This is Integration host factor subunit alpha from Rhizorhabdus wittichii (strain DSM 6014 / CCUG 31198 / JCM 15750 / NBRC 105917 / EY 4224 / RW1) (Sphingomonas wittichii).